The sequence spans 861 residues: Bifunctional uridylyltransferase/uridylyl-removing enzyme (861 aa).

The interval 1 to 321 (MKNDNRIIKN…VYHQKQKIIR (321 aa)) is uridylyltransferase. The tract at residues 322–678 (LDDEFQLSNR…IMPHHSQGGT (357 aa)) is uridylyl-removing. An HD domain is found at 440 to 562 (VDQHTLFVIR…LPHARYLDYL (123 aa)). 2 consecutive ACT domains span residues 679-760 (EVFI…AVSR) and 788-861 (QLFL…KSKY).

This sequence belongs to the GlnD family. The cofactor is Mg(2+).

It catalyses the reaction [protein-PII]-L-tyrosine + UTP = [protein-PII]-uridylyl-L-tyrosine + diphosphate. It carries out the reaction [protein-PII]-uridylyl-L-tyrosine + H2O = [protein-PII]-L-tyrosine + UMP + H(+). Its activity is regulated as follows. Uridylyltransferase (UTase) activity is inhibited by glutamine, while glutamine activates uridylyl-removing (UR) activity. Modifies, by uridylylation and deuridylylation, the PII regulatory proteins (GlnB and homologs), in response to the nitrogen status of the cell that GlnD senses through the glutamine level. Under low glutamine levels, catalyzes the conversion of the PII proteins and UTP to PII-UMP and PPi, while under higher glutamine levels, GlnD hydrolyzes PII-UMP to PII and UMP (deuridylylation). Thus, controls uridylylation state and activity of the PII proteins, and plays an important role in the regulation of nitrogen assimilation and metabolism. The polypeptide is Bifunctional uridylyltransferase/uridylyl-removing enzyme (Legionella pneumophila (strain Corby)).